A 378-amino-acid polypeptide reads, in one-letter code: Transcription initiation factor IIA subunit 1 (378 aa).

An N-acetylalanine modification is found at Ala-2. Low complexity-rich tracts occupy residues 69–79 (QVQQQHQPQQQ), 89–106 (QQAQ…TQQV), and 247–281 (PAQA…TGDT). Disordered regions lie at residues 69–108 (QVQQ…QVLI) and 247–331 (PAQA…QELF). Phosphoserine; by TAF1 is present on residues Ser-282, Ser-283, Ser-318, and Ser-323. Acidic residues predominate over residues 282–331 (SSEEDEDEEEDYDDDEEEDKEKDGAEDGQVEEEPLNSEDDVSDEEGQELF). Residues His-345 and Arg-346 each contribute to the DNA site.

This sequence belongs to the TFIIA subunit 1 family. As to quaternary structure, TFIIA is a heterodimer of the large unprocessed subunit 1 and a small subunit gamma. It was originally believed to be a heterotrimer of an alpha (p35), a beta (p19) and a gamma subunit (p12). TFIIA forms a complex with TBP. Part of TBP-based Pol II pre-initiation complex (PIC), in which Pol II core assembles with general transcription factors and other specific initiation factors including GTF2E1, GTF2E2, GTF2F1, GTF2F2, TCEA1, ERCC2, ERCC3, GTF2H2, GTF2H3, GTF2H4, GTF2H5, GTF2A1, GTF2A2, GTF2B and TBP; this large multi-subunit PIC complex mediates DNA unwinding and targets Pol II core to the transcription start site where the first phosphodiester bond forms. In terms of processing, the alpha and beta subunits are postranslationally produced from the precursor form by TASP1. The cleavage promotes proteasomal degradation. Expressed in pachytene spermatocytes and spermatids.

The protein localises to the nucleus. Its function is as follows. TFIIA is a component of the transcription machinery of RNA polymerase II and plays an important role in transcriptional activation. TFIIA in a complex with TBP mediates transcriptional activity. This is Transcription initiation factor IIA subunit 1 (Gtf2a1) from Mus musculus (Mouse).